A 548-amino-acid polypeptide reads, in one-letter code: Chaperonin GroEL (548 aa).

Residues 30–33 (TLGP), Lys-51, 87–91 (DGTTT), Gly-415, and Asp-495 contribute to the ATP site.

It belongs to the chaperonin (HSP60) family. In terms of assembly, forms a cylinder of 14 subunits composed of two heptameric rings stacked back-to-back. Interacts with the co-chaperonin GroES.

The protein localises to the cytoplasm. The enzyme catalyses ATP + H2O + a folded polypeptide = ADP + phosphate + an unfolded polypeptide.. Functionally, together with its co-chaperonin GroES, plays an essential role in assisting protein folding. The GroEL-GroES system forms a nano-cage that allows encapsulation of the non-native substrate proteins and provides a physical environment optimized to promote and accelerate protein folding. In Idiomarina loihiensis (strain ATCC BAA-735 / DSM 15497 / L2-TR), this protein is Chaperonin GroEL.